A 1648-amino-acid chain; its full sequence is MSLHSTHNRNNSGDILDIPSSQNSSSLNALTHSSRLKLHLKSDMSECENDDPLLRSAGKVRDINRTYVISASRKTADMPLTPNPVGRLALQRRTTRNKESSLLVSELEDTTEKTAETRLTLQRRAKTDSAEKWKTAEIDSVKMTLNVGGETENNGVSKESRTNVRIVNNAKNSFVASSVPLDEDPQVIEMMADKKYKETFSAPSRANENVALKYSSNRPPIASLSQTEVVRSGHLTTKPTQSKLDIKVLGTGNLYHRSIGKEIAKTSNKFGSLEKRTPTKCTTEHKLTTKCSLPQLKSPAPSILKNRMSNLQVKQRPKSSFLANKQERSAENTILPEEETVVQNTSAGKDPLKVENSQVTVAVRVRPFTKREKIEKASQVVFMSGKEITVEHPDTKQVYNFIYDVSFWSFDECHPHYASQTTVYEKLAAPLLERAFEGFNTCLFAYGQTGSGKSYTMMGFSEEPGIIPRFCEDLFSQVARKQTQEVSYHIEMSFFEVYNEKIHDLLVCKDENGQRKQPLRVREHPVYGPYVEALSMNIVSSYADIQSWLELGNKQRATAATGMNDKSSRSHSVFTLVMTQTKTEFVEGEEHDHRITSRINLIDLAGSERCSTAHTNGDRLKEGVSINKSLLTLGKVISALSEQANQRSVFIPYRESVLTWLLKESLGGNSKTAMIATISPAASNIEETLSTLRYANQARLIVNIAKVNEDMNAKLIRELKAEIAKLKAAQRNSRNIDPERYRLCRQEITSLRMKLHQQERDMAEMQRVWKEKFEQAEKRKLQETKELQKAGIMFQMDNHLPNLVNLNEDPQLSEMLLYMIKEGTTTVGKYKPNSSHDIQLSGVLIADDHCTIKNFGGTVSIIPVGEAKTYVNGKHILEITVLRHGDRVILGGDHYFRFNHPVEVQKGKRPSGRDTPISEGPKDFEFAKNELLMAQRSQLEAEIKEAQLKAKEEMMQGIQIAKEMAQQELSSQKAAYESKIKALEAELREESQRKKMQEINNQKANHKIEELEKAKQHLEQEIYVNKKRLEMETLATKQALEDHSIRHARILEALETEKQKIAKEVQILQQNRNNRDKTFTVQTTWSSMKLSMMIQEANAISSKLKTYYVFGRHDISDKSSSDTSIRVRNLKLGISTFWSLEKFESKLAAMKELYESNGSNRGEDAFCDPEDEWEPDITDAPVSSLSRRRSRSLMKNRRISGCLHDIQVHPIKNLHSSHSSGLMDKSSTIYSNSAESFLPGICKELIGSSLDFFGQSYDEERTIADSLINSFLKIYNGLFAISKAHEEQDEESQDNLFSSDRAIQSLTIQTACAFEQLVVLMKHWLSDLLPCTNIARLEDELRQEVKKLGGYLQLFLQGCCLDISSMIKEAQKNAIQIVQQAVKYVGQLAVLKGSKLHFLENGNNKAASVQEEFMDAVCDGVGLGMKILLDSGLEKAKELQHELFRQCTKNEVTKEMKTNAMGLIRSLENIFAESKIKSFRRQVQEENFEYQDFKRMVNRAPEFLKLKHCLEKAIEIIISALKGCHSDINLLQTCVESIRNLASDFYSDFSVPSTSVGSYESRVTHIVHQELESLAKSLLFCFESEESPDLLKPWETYNQNTKEEHQQSKSSGIDGSKNKGVPKRVYELHGSSPAVSSEECTPSRIQWV.

Residues 1–27 (MSLHSTHNRNNSGDILDIPSSQNSSSL) are disordered. The required for PRC1-binding stretch occupies residues 1-356 (MSLHSTHNRN…AGKDPLKVEN (356 aa)). Serine 12 and serine 272 each carry phosphoserine. A Phosphothreonine modification is found at threonine 277. At serine 346 the chain carries Phosphoserine. Positions 356–737 (NSQVTVAVRV…AAQRNSRNID (382 aa)) are required for microtubule-binding with high affinity. Positions 358-701 (QVTVAVRVRP…LRYANQARLI (344 aa)) constitute a Kinesin motor domain. 447 to 454 (GQTGSGKS) contributes to the ATP binding site. A coiled-coil region spans residues 705–791 (AKVNEDMNAK…QETKELQKAG (87 aa)). An FHA domain is found at 825–891 (TTVGKYKPNS…LRHGDRVILG (67 aa)). The interval 901 to 1648 (PVEVQKGKRP…ECTPSRIQWV (748 aa)) is required for CIT-binding. Residue threonine 915 is modified to Phosphothreonine. Residues 922-1079 (KDFEFAKNEL…QNRNNRDKTF (158 aa)) are a coiled coil. A phosphoserine mark is found at serine 937 and serine 1292. Coiled-coil stretches lie at residues 1332–1348 (TNIARLEDELRQEVKKL) and 1468–1500 (ENIFAESKIKSFRRQVQEENFEYQDFKRMVNRA). Residues 1600 to 1648 (NTKEEHQQSKSSGIDGSKNKGVPKRVYELHGSSPAVSSEECTPSRIQWV) are disordered. Over residues 1633-1648 (PAVSSEECTPSRIQWV) the composition is skewed to polar residues.

The protein belongs to the TRAFAC class myosin-kinesin ATPase superfamily. Kinesin family. As to quaternary structure, directly interacts with PRC1 within a complex also containing KIF4A, KIF20A and KIF23; targets to the central spindle. Directly interacts with CIT depending on the activation state of the kinase (stronger interaction with the kinase-dead form); targets to the midbody. Interacts with ARRB2; the interaction is detected in the nucleus upon OR1D2 stimulation. Interacts with AKT1; the interaction is detected in the plasma membrane upon INS stimulation and promotes AKT1 phosphorylation. Interacts with SVIL; at midbody during cytokinesis. Interacts with RADIL (via PDZ domain); recruits RADIL to the microtubule network restricting RADIL from interaction with activated RAP1A.

It is found in the nucleus. The protein localises to the cytoplasm. Its subcellular location is the cytoskeleton. It localises to the spindle. The protein resides in the midbody. Its function is as follows. Microtubule motor protein that binds to microtubules with high affinity through each tubulin heterodimer and has an ATPase activity. Plays a role in many processes like cell division, cytokinesis and also in cell proliferation and apoptosis. During cytokinesis, targets to central spindle and midbody through its interaction with PRC1 and CIT respectively. Regulates cell growth through regulation of cell cycle progression and cytokinesis. During cell cycle progression acts through SCF-dependent proteasomal ubiquitin-dependent protein catabolic process which controls CDKN1B degradation, resulting in positive regulation of cyclins, including CCNE1, CCND1 and CCNB1. During late neurogenesis, regulates the cerebellar, cerebral cortex and olfactory bulb development through regulation of apoptosis, cell proliferation and cell division. Also is required for chromosome congression and alignment during mitotic cell cycle process. Regulates cell spreading, focal adhesion dynamics, and cell migration through its interaction with RADIL resulting in regulation of RAP1A-mediated inside-out integrin activation by tethering RADIL on microtubules. The sequence is that of Kinesin-like protein KIF14 from Homo sapiens (Human).